The primary structure comprises 380 residues: MYG1 exonuclease (380 aa).

Residues 1–46 constitute a mitochondrion transit peptide; it reads MGRRFLRGILTLPLRSVLQAQHRMLGSEQDPPAKRPRNNLMAPPRI. N6-acetyllysine is present on residues Lys-266 and Lys-272.

Belongs to the MYG1 family. Ubiquitously expressed, with highest levels in testis.

The protein localises to the nucleus. It is found in the nucleoplasm. The protein resides in the mitochondrion matrix. Its subcellular location is the nucleolus. Functionally, 3'-5' RNA exonuclease which cleaves in situ on specific transcripts in both nucleus and mitochondrion. Involved in regulating spatially segregated organellar RNA processing, acts as a coordinator of nucleo-mitochondrial crosstalk. In nucleolus, processes pre-ribosomal RNA involved in ribosome assembly and alters cytoplasmic translation. In mitochondrial matrix, processes 3'-termini of the mito-ribosomal and messenger RNAs and controls translation of mitochondrial proteins. The polypeptide is MYG1 exonuclease (Mus musculus (Mouse)).